The following is a 160-amino-acid chain: Allophycocyanin alpha chain (160 aa).

Asn70 is modified (N4-methylasparagine). (2R,3E)-phycocyanobilin is bound at residue Cys80.

The protein belongs to the phycobiliprotein family. Component of the phycobilisome. Heterodimer of an alpha and a beta chain. In terms of processing, contains one covalently linked phycocyanobilin chromophore.

The protein resides in the cellular thylakoid membrane. Functionally, light-harvesting photosynthetic bile pigment-protein from the phycobiliprotein complex. Allophycocyanin has a maximum absorption at approximately 650 nanometers. The protein is Allophycocyanin alpha chain (apcA) of Anabaena cylindrica.